The sequence spans 417 residues: Squalene synthase (417 aa).

NADP(+)-binding residues include Arg52 and Arg77. Mg(2+)-binding residues include Asp80, Glu83, and Asp84. Residue Arg218 coordinates NADP(+). Residues 284–304 (SIFNFCAIPQVMAIATLAACY) traverse the membrane as a helical segment. Residues Lys315 and Arg317 each contribute to the NADP(+) site. The chain crosses the membrane as a helical span at residues 384–404 (PIYLSFVMLLAALSWQYLSTL).

Belongs to the phytoene/squalene synthase family. It depends on Mg(2+) as a cofactor.

It is found in the endoplasmic reticulum membrane. It catalyses the reaction 2 (2E,6E)-farnesyl diphosphate + NADPH + H(+) = squalene + 2 diphosphate + NADP(+). The catalysed reaction is 2 (2E,6E)-farnesyl diphosphate + NADH + H(+) = squalene + 2 diphosphate + NAD(+). It carries out the reaction presqualene diphosphate + NADH + H(+) = squalene + diphosphate + NAD(+). The enzyme catalyses presqualene diphosphate + NADPH + H(+) = squalene + diphosphate + NADP(+). It catalyses the reaction 2 (2E,6E)-farnesyl diphosphate = presqualene diphosphate + diphosphate. Its pathway is terpene metabolism; lanosterol biosynthesis; lanosterol from farnesyl diphosphate: step 1/3. Its function is as follows. Catalyzes the condensation of 2 farnesyl pyrophosphate (FPP) moieties to form squalene. Proceeds in two distinct steps. In the first half-reaction, two molecules of FPP react to form the stable presqualene diphosphate intermediate (PSQPP), with concomitant release of a proton and a molecule of inorganic diphosphate. In the second half-reaction, PSQPP undergoes heterolysis, isomerization, and reduction with NADPH or NADH to form squalene. It is the first committed enzyme of the sterol biosynthesis pathway. The sequence is that of Squalene synthase (FDFT1) from Bos taurus (Bovine).